The sequence spans 402 residues: Endo-polygalacturonase (402 aa).

A signal peptide spans 1-23 (MEYQSGKRVLSLSLGLIGLFSAS). The Proton donor role is filled by Asp249. His277 is a catalytic residue.

It belongs to the glycosyl hydrolase 28 family. Monomer.

It localises to the secreted. The catalysed reaction is (1,4-alpha-D-galacturonosyl)n+m + H2O = (1,4-alpha-D-galacturonosyl)n + (1,4-alpha-D-galacturonosyl)m.. In terms of biological role, involved in maceration and soft-rotting of plant tissue. The chain is Endo-polygalacturonase (peh) from Pectobacterium carotovorum subsp. carotovorum (Erwinia carotovora subsp. carotovora).